The following is a 408-amino-acid chain: Putative UPF0496 protein 2 (408 aa).

The next 2 helical transmembrane spans lie at 224–244 (RIARGTAAAALVGACAAAIVA) and 252–272 (ALVGIGVAAAAFGATPAGAAR). The segment at 385–408 (MARGLPPPSPATVTTTSEERLTSS) is disordered.

This sequence belongs to the UPF0496 family.

The protein resides in the membrane. The protein is Putative UPF0496 protein 2 of Oryza sativa subsp. indica (Rice).